The following is a 269-amino-acid chain: Phosphate import ATP-binding protein PstB (269 aa).

The ABC transporter domain occupies 21–264 (SEVRNLSFYY…PKNKQTEDYI (244 aa)). 53–60 (GPSGCGKS) is an ATP binding site.

It belongs to the ABC transporter superfamily. Phosphate importer (TC 3.A.1.7) family. In terms of assembly, the complex is composed of two ATP-binding proteins (PstB), two transmembrane proteins (PstC and PstA) and a solute-binding protein (PstS).

It localises to the cell inner membrane. The enzyme catalyses phosphate(out) + ATP + H2O = ADP + 2 phosphate(in) + H(+). In terms of biological role, part of the ABC transporter complex PstSACB involved in phosphate import. Responsible for energy coupling to the transport system. This chain is Phosphate import ATP-binding protein PstB, found in Nitrosospira multiformis (strain ATCC 25196 / NCIMB 11849 / C 71).